A 478-amino-acid polypeptide reads, in one-letter code: MANKSRPKKIKAPYRKYVAGEGFSSTRNDNKAKEFTITIPEDAELIETPQGSYYYDETNDTIVKLTRLSNEKKDKKGRKQSPSSSSTSSSKGEKNGKVIESEEARMHSVSVKMVLPWEIQHRIIHYLDIPEKEEKLNKTANGKKTTTGINMNYLLVCRNWYAMCLPKLYYAPALTSKNFNGFVDTIIINKKKNLGHYVFELNLSTILQSGRNSFVSKLLRRCCSNLTKFIAPQTSFGYAPLISLKSCHDLKFLDLGLVSETVKLKELFSAIKNFTKLTHLSFPRSSIDCQGFQDIQWPQNLRYLKLSGGITNEFVIDTKWPTTITTLEFSYCPQITELSIYSLLSQIGDNLKHLFFHYPMPSLAENSLDHVFTYCANLISLQLMVDYCSKWCFSEFMLSKLVEYDRPLKTLYLECSGSLGLASKIHPDDLTIAILESRLPCLKNICVSPKLGWNMKSDEVADLVVSLEDQDGSLYLNY.

The span at 1–14 (MANKSRPKKIKAPY) shows a compositional bias: basic residues. Disordered regions lie at residues 1-32 (MANK…DNKA) and 67-101 (RLSN…VIES). A compositionally biased stretch (low complexity) spans 80-90 (QSPSSSSTSSS). Basic and acidic residues predominate over residues 91–101 (KGEKNGKVIES). The F-box domain maps to 112–173 (KMVLPWEIQH…CLPKLYYAPA (62 aa)).

Interacts with SKP1. Component of the probable SCF(YDR306C) complex containing CDC53, SKP1, RBX1 and YDR306C. Autoubiquitinated by the E3 ubiquitin ligase complex in conjunction with the E2 enzyme CDC34.

It participates in protein modification; protein ubiquitination. Substrate recognition component of a SCF (SKP1-CUL1-F-box protein) E3 ubiquitin-protein ligase complex which mediates the ubiquitination and subsequent proteasomal degradation of target proteins. Probably recognizes and binds to phosphorylated target proteins. This Saccharomyces cerevisiae (strain ATCC 204508 / S288c) (Baker's yeast) protein is F-box protein YDR306C.